Here is a 553-residue protein sequence, read N- to C-terminus: Protein PNS1 (553 aa).

The interval 1–53 (MFGEGNKPTEPVPAYDAGQDPFQGPNASKNQYQGSAADYNGAPPPPASQPGNQ) is disordered. The Cytoplasmic segment spans residues 1–94 (MFGEGNKPTE…EDSKPKWNDW (94 aa)). Over residues 25–34 (PNASKNQYQG) the composition is skewed to polar residues. The helical transmembrane segment at 95-115 (PFTIFFAGCVIAFIVVAAITL) threads the bilayer. The Extracellular portion of the chain corresponds to 116–142 (RAWSQNSSSQGSGVYDGANTGTLTTNS). A glycan (N-linked (GlcNAc...) asparagine) is linked at Asn-121. The helical transmembrane segment at 143–163 (AIMLAISCIIAFVFSIIGIVL) threads the bilayer. Residues 164–169 (ARMFPK) lie on the Cytoplasmic side of the membrane. Residues 170-190 (FFIIAGILFNIIAGLATAIMY) form a helical membrane-spanning segment. At 191–192 (LS) the chain is on the extracellular side. A helical membrane pass occupies residues 193–213 (LKYYSAGIVFLVFTAICALFY). The Cytoplasmic segment spans residues 214-241 (WRMRHRIPFTVAVLKTVMDVMKSYPQTW). Residues 242-262 (FVTLIGSIIATAFSILFSAVI) traverse the membrane as a helical segment. At 263 to 287 (VATYMKYDDKANNPGCSTNGGSCSN) the chain is on the extracellular side. A helical transmembrane segment spans residues 288–308 (AKLIGLLVLVFFCGYYIAEVI). Residues 309–349 (RNVIHCTVSGIFGAWYYFSKSDQGMPKWPGFGALKRSLTYS) are Cytoplasmic-facing. Residues 350–370 (FGSICFGSLIVTIIETLKAVL) form a helical membrane-spanning segment. The Extracellular portion of the chain corresponds to 371 to 385 (RLAVDGVMGGGGADN). Residues 386–406 (GWMQCLALIANWIFSFLEWLA) traverse the membrane as a helical segment. Residues 407-450 (RYFNHYAYVFIALYGKPYLRAAKETWYMLREKGIDALINDNLVN) lie on the Cytoplasmic side of the membrane. The helical transmembrane segment at 451–471 (VALSFFTLFTCYITTLFAYLY) threads the bilayer. The Extracellular segment spans residues 472–484 (LRYTDPNYNDNNN). Residues 485-505 (FTPALMAFAFVIAMEICNVIT) traverse the membrane as a helical segment. Residues 506-553 (ETIRSGTATFFVALGNDPEVFHLSYPERFDEIFRAYPEVLKKLSHQNV) lie on the Cytoplasmic side of the membrane.

The protein belongs to the CTL (choline transporter-like) family.

It localises to the cell membrane. Functionally, probably involved in transport through the plasma membrane. The polypeptide is Protein PNS1 (PNS1) (Kluyveromyces lactis (strain ATCC 8585 / CBS 2359 / DSM 70799 / NBRC 1267 / NRRL Y-1140 / WM37) (Yeast)).